The chain runs to 304 residues: Porphobilinogen deaminase (304 aa).

Position 239 is an S-(dipyrrolylmethanemethyl)cysteine (Cys239).

It belongs to the HMBS family. As to quaternary structure, monomer. The cofactor is dipyrromethane.

It catalyses the reaction 4 porphobilinogen + H2O = hydroxymethylbilane + 4 NH4(+). It functions in the pathway porphyrin-containing compound metabolism; protoporphyrin-IX biosynthesis; coproporphyrinogen-III from 5-aminolevulinate: step 2/4. Its function is as follows. Tetrapolymerization of the monopyrrole PBG into the hydroxymethylbilane pre-uroporphyrinogen in several discrete steps. This Brucella ovis (strain ATCC 25840 / 63/290 / NCTC 10512) protein is Porphobilinogen deaminase.